The following is a 507-amino-acid chain: Myocyte-specific enhancer factor 2A (507 aa).

In terms of domain architecture, MADS-box spans 3-57 (RKKIQITRIMDERNRQVTFTKRKFGLMKKAYELSVLCDCEIALIIFNSSNKLFQY). The mef2-type DNA-binding region spans 58-86 (ASTDMDKVLLKYTEYNEPHESGTNSDIVE). Residue Ser59 is modified to Phosphoserine; by CK2. Phosphoserine is present on residues Ser98 and Ser235. A disordered region spans residues 175–269 (ADSSMLSPPQ…GGGNLGMNSR (95 aa)). The segment covering 209-245 (LSTSDLTVPNGAGSSPVGNGFVNSRASPNLVGTTGAN) has biased composition (polar residues). Lys249 bears the N6-acetyllysine mark. At Ser255 the chain carries Phosphoserine. The tract at residues 266–283 (MNSRKPDLRVVIPPSSKG) is required for interaction with MAPKs. Positions 289-296 (SEEEELEL) are beta domain. 2 positions are modified to phosphothreonine; by MAPK7 and MAPK14: Thr312 and Thr319. Residue Ser355 is modified to Phosphoserine; by MAPK7. A compositionally biased stretch (polar residues) spans 390–402 (SNLSINTNQNINI). The interval 390-507 (SNLSINTNQN…KRMRMDAWVT (118 aa)) is disordered. At Lys403 the chain carries N6-acetyllysine; alternate. A Glycyl lysine isopeptide (Lys-Gly) (interchain with G-Cter in SUMO); alternate cross-link involves residue Lys403. Ser408 is subject to Phosphoserine; by CDK5. Thr415 is modified (phosphothreonine). Residues 423–443 (QPPPPSQAPQPQPPQPQPQPQ) show a composition bias toward pro residues. Residue Ser453 is modified to Phosphoserine. Positions 453–466 (SPVDSLSSSSSSYD) are enriched in low complexity. Composition is skewed to basic and acidic residues over residues 467–477 (GSDREDPRGDF) and 488–507 (NTED…AWVT).

This sequence belongs to the MEF2 family. As to quaternary structure, binds DNA as a homo- or heterodimer. Dimerizes with MEF2D. Interacts with HDAC7. Interacts with PIAS1; the interaction enhances sumoylation. Interacts with HDAC4, HDAC9 and SLC2A4RG. Interacts (via the N-terminal) with MAPK7; the interaction results in the phosphorylation and transcriptional activity of MEF2A. In terms of processing, constitutive phosphorylation on Ser-408 promotes Lys-403 sumoylation thus preventing acetylation at this site. Dephosphorylation on Ser-408 by PPP3CA upon neuron depolarization promotes a switch from sumoylation to acetylation on residue Lys-403 leading to inhibition of dendrite claw differentiation. Phosphorylation on Thr-312 and Thr-319 are the main sites involved in p38 MAPK signaling and activate transcription. Phosphorylated on these sites by MAPK14/p38alpha and MAPK11/p38beta, but not by MAPK13/p38delta nor by MAPK12/p38gamma. Phosphorylation on Ser-408 by CDK5 induced by neurotoxicity inhibits MEF2A transcriptional activation leading to apoptosis of cortical neurons. Phosphorylation on Thr-312, Thr-319 and Ser-355 can be induced by EGF. Sumoylation on Lys-403 is enhanced by PIAS1 and represses transcriptional activity. Phosphorylation on Ser-408 is required for sumoylation. Has no effect on nuclear location nor on DNA binding. Sumoylated with SUMO1 and, to a lesser extent with SUMO2 and SUMO3. PIASx facilitates sumoylation in postsynaptic dendrites in the cerebellar cortex and promotes their morphogenesis. Post-translationally, acetylation on Lys-403 activates transcriptional activity. Acetylated by p300 on several sites in diffentiating myocytes. Acetylation on Lys-4 increases DNA binding and transactivation. Hyperacetylation by p300 leads to enhanced cardiac myocyte growth and heart failure. In terms of processing, proteolytically cleaved on several sites by caspase 3 and caspase 7 following neurotoxicity. Preferentially cleaves the CDK5-mediated hyperphosphorylated form which leads to cortical neuron apoptosis and transcriptional inactivation.

It is found in the nucleus. In terms of biological role, transcriptional activator which binds specifically to the MEF2 element, 5'-YTA[AT](4)TAR-3', found in numerous muscle-specific genes. Also involved in the activation of numerous growth factor- and stress-induced genes. Mediates cellular functions not only in skeletal and cardiac muscle development, but also in neuronal differentiation and survival. Plays diverse roles in the control of cell growth, survival and apoptosis via p38 MAPK signaling in muscle-specific and/or growth factor-related transcription. In cerebellar granule neurons, phosphorylated and sumoylated MEF2A represses transcription of NUR77 promoting synaptic differentiation. Associates with chromatin to the ZNF16 promoter. This Sus scrofa (Pig) protein is Myocyte-specific enhancer factor 2A (MEF2A).